We begin with the raw amino-acid sequence, 712 residues long: Matrix metalloproteinase-9 (712 aa).

Positions 1 to 19 are cleaved as a signal peptide; sequence MSPLQPLVLALLVLACCSA. Residues 20–106 constitute a propeptide, activation peptide; the sequence is VPRRRQPTVV…PRCGVPDVGR (87 aa). A glycan (N-linked (GlcNAc...) asparagine) is linked at N38. Positions 97 to 104 match the Cysteine switch motif; that stretch reads PRCGVPDV. C99 contacts Zn(2+). Residues N120 and N127 are each glycosylated (N-linked (GlcNAc...) asparagine). Ca(2+) is bound by residues D131 and D165. Residues H175 and D177 each contribute to the Zn(2+) site. Positions 182, 183, 185, and 187 each coordinate Ca(2+). A Zn(2+)-binding site is contributed by H190. G197, Q199, and D201 together coordinate Ca(2+). H203 is a Zn(2+) binding site. The Ca(2+) site is built by D205, D206, and E208. 3 consecutive Fibronectin type-II domains span residues 225–273, 283–331, and 342–390; these read AKGA…FCPS, ADGK…FCPT, and AAGE…FCPD. Disulfide bonds link C230-C256, C244-C271, C288-C314, C302-C329, C347-C373, and C361-C388. H401 provides a ligand contact to Zn(2+). Residue E402 is part of the active site. Residues H405 and H411 each contribute to the Zn(2+) site. Residues 440–519 are disordered; sequence QHLYGPRPEP…PTESPDPAED (80 aa). Positions 455–465 are enriched in low complexity; sequence TTTTTTTTEPQ. A compositionally biased stretch (pro residues) spans 491–504; it reads TGPPAAGPTGPPTA. A compositionally biased stretch (low complexity) spans 505-514; it reads GPSAAPTESP. A disulfide bond links C521 and C709. Hemopexin repeat units follow at residues 523–568, 569–613, 615–662, and 663–709; these read VDIF…WPAL, PRKL…GLGP, VAQV…FPGV, and PIST…LLKC.

It belongs to the peptidase M10A family. In terms of assembly, exists as monomer or homodimer; disulfide-linked. Also exists as heterodimer with LCN2. Macrophages and transformed cell lines produce only the monomeric form. Interacts with ECM1. Requires Zn(2+) as cofactor. It depends on Ca(2+) as a cofactor. In terms of processing, N- and O-glycosylated.

The protein localises to the secreted. It localises to the extracellular space. It is found in the extracellular matrix. It catalyses the reaction Cleavage of gelatin types I and V and collagen types IV and V.. Its function is as follows. Matrix metalloproteinase that plays an essential role in local proteolysis of the extracellular matrix and in leukocyte migration. Could play a role in bone osteoclastic resorption. Cleaves KiSS1 at a Gly-|-Leu bond. Cleaves NINJ1 to generate the Secreted ninjurin-1 form. Cleaves type IV and type V collagen into large C-terminal three quarter fragments and shorter N-terminal one quarter fragments. Degrades fibronectin but not laminin or Pz-peptide. The sequence is that of Matrix metalloproteinase-9 from Bos taurus (Bovine).